A 62-amino-acid polypeptide reads, in one-letter code: UPF0291 protein CLJ_B2839 (62 aa).

This sequence belongs to the UPF0291 family.

The protein localises to the cytoplasm. This Clostridium botulinum (strain 657 / Type Ba4) protein is UPF0291 protein CLJ_B2839.